A 305-amino-acid polypeptide reads, in one-letter code: MSDLDRQIGQLKRCEPLSESEVKALCLKAMEILVEESNVQRVDAPVTLCGDIHGQFYDMMELFKVGGDCPKTNYLFMGDFVDRGYYSVETFLLLLALKVRYPDRITLIRGNHESRQITQVYGFYDECLRKYGSSNVWRYCTDIFDYMSLSAVVENKIFCVHGGLSPAIMTLDQIRTIDRKQEVPHDGAMCDLLWSDPEDIVDGWGLSPRGAGFLFGGSVVTSFNHSNNIDYIARAHQLVMEGYKWMFDSQIVTVWSAPNYCYRCGNVASILELDENLNKEFRVFDAAQQDSRGPPAKKPAPDYFL.

Residues Asp51, His53, Asp79, and Asn111 each coordinate Mn(2+). The Proton donor role is filled by His112. Mn(2+) contacts are provided by His161 and His236.

This sequence belongs to the PPP phosphatase family. PP-4 (PP-X) subfamily. In terms of assembly, interacts with TAP46. Requires Mn(2+) as cofactor. In terms of tissue distribution, ubiquitous, mostly expressed in root mersitems, flowers, and vascular tissues.

It localises to the plastid stroma. The enzyme catalyses O-phospho-L-seryl-[protein] + H2O = L-seryl-[protein] + phosphate. It catalyses the reaction O-phospho-L-threonyl-[protein] + H2O = L-threonyl-[protein] + phosphate. The polypeptide is Serine/threonine-protein phosphatase PP-X isozyme 1 (PPX1) (Arabidopsis thaliana (Mouse-ear cress)).